Consider the following 211-residue polypeptide: Protein-methionine-sulfoxide reductase heme-binding subunit MsrQ (211 aa).

5 helical membrane passes run 8-28, 54-74, 82-102, 116-136, and 153-173; these read VIWL…WLVW, FLLA…PLLI, LWCF…ELGV, PYLT…FTST, and FVYL…KIIS.

Belongs to the MsrQ family. As to quaternary structure, heterodimer of a catalytic subunit (MsrP) and a heme-binding subunit (MsrQ). FMN serves as cofactor. It depends on heme b as a cofactor.

Its subcellular location is the cell inner membrane. In terms of biological role, part of the MsrPQ system that repairs oxidized periplasmic proteins containing methionine sulfoxide residues (Met-O), using respiratory chain electrons. Thus protects these proteins from oxidative-stress damage caused by reactive species of oxygen and chlorine generated by the host defense mechanisms. MsrPQ is essential for the maintenance of envelope integrity under bleach stress, rescuing a wide series of structurally unrelated periplasmic proteins from methionine oxidation, including the primary periplasmic chaperone SurA and the lipoprotein Pal. MsrQ provides electrons for reduction to the reductase catalytic subunit MsrP, using the quinone pool of the respiratory chain. The protein is Protein-methionine-sulfoxide reductase heme-binding subunit MsrQ of Escherichia coli O6:K15:H31 (strain 536 / UPEC).